Consider the following 850-residue polypeptide: Protein STB2 (850 aa).

A phosphoserine mark is found at Ser594 and Ser625.

The protein to yeast STB6. In terms of assembly, interacts with SIN3.

In Saccharomyces cerevisiae (strain ATCC 204508 / S288c) (Baker's yeast), this protein is Protein STB2 (STB2).